The following is a 656-amino-acid chain: F-box/LRR-repeat protein 10 (656 aa).

An F-box domain is found at 20-66; the sequence is ERSLDLLPAALLETIMTKLDVASLCSLASTCKTLKSCVTRVLTFTPN. LRR repeat units lie at residues 71–96, 120–145, 151–176, 194–221, 243–268, 277–301, 310–335, 336–361, 362–387, 388–412, 413–437, 439–463, 464–491, 492–517, 518–551, and 552–578; these read NVSL…KLDC, CRDF…CLGS, GRSI…ALMF, SDRL…EISG, VDCI…DIRD, VSDL…SLIR, FRRV…CLGG, FCRV…SIYH, GPKL…SLRR, CHLL…DLRG, CRNL…LLDG, DISD…SVRG, CRNL…DLSN, LPNL…QLRE, CRLI…DLYD, and CGGI…GITG. Residues 632–656 are disordered; it reads ILGDEGDVEMEDAEDESEEDASEED.

The protein is F-box/LRR-repeat protein 10 (FBL10) of Arabidopsis thaliana (Mouse-ear cress).